The following is a 183-amino-acid chain: MNLSAKTVVLIAIGAALYGIGGLPMFGIPVFANTTLKPAMAVLALFSVLFGPLVGFLVGFIGHWVTDMFAGWGVWLTWVLGSGLVGLIIGFYPKITRGRLEMGKFTKCDFALFVFLAFLGNVIGYGCSAYLDSVLYAEPFTKVVAQLIIIAAGNTLLIAIVGHYILTAVAKRKQQSYNLKEAD.

5 helical membrane-spanning segments follow: residues 8 to 28, 41 to 61, 69 to 89, 110 to 130, and 147 to 167; these read VVLI…MFGI, AVLA…VGFI, FAGW…GLII, FALF…CSAY, and LIII…YILT.

The protein belongs to the UPF0397 family.

It localises to the cell membrane. In Photobacterium profundum (strain SS9), this protein is UPF0397 protein PBPRA2239.